The following is a 469-amino-acid chain: Tetratricopeptide repeat protein 38 (469 aa).

3 TPR repeats span residues 107–140, 179–212, and 251–284; these read REKL…HPTD, SYVK…ERTD, and CHVY…QCFA.

This sequence belongs to the TTC38 family.

The chain is Tetratricopeptide repeat protein 38 (ttc38) from Xenopus laevis (African clawed frog).